A 327-amino-acid polypeptide reads, in one-letter code: UPF0065 protein in gbd 5'region (327 aa).

The tat-type signal signal peptide spans 1 to 30 (MQRRHFIARAGIAAATAALGLAAMPAQAQA).

It belongs to the UPF0065 (bug) family. In terms of processing, predicted to be exported by the Tat system. The position of the signal peptide cleavage has not been experimentally proven.

The protein localises to the periplasm. The polypeptide is UPF0065 protein in gbd 5'region (Cupriavidus necator (Alcaligenes eutrophus)).